A 322-amino-acid chain; its full sequence is Chromoplast-specific carotenoid-associated protein, chromoplastic (322 aa).

The transit peptide at 1-58 directs the protein to the chromoplast; that stretch reads MAFVSQFNQLPCKTLALNPPQPQLTSKPSVFPIASIGATARAAAGKSLISVRPAFKVR. The interval 67 to 88 is disordered; it reads GEDKDEKYGDDSSVAVAEKEEE.

It belongs to the PAP/fibrillin family. As to expression, expressed in corollas. Not detected in fruits, stems, leaves, and roots.

The protein resides in the plastid. The protein localises to the chromoplast. Functionally, may be involved in carotenoid sequestration within chromoplasts. The sequence is that of Chromoplast-specific carotenoid-associated protein, chromoplastic (CHRC) from Cucumis sativus (Cucumber).